We begin with the raw amino-acid sequence, 40 residues long: Photosystem II reaction center protein J (40 aa).

Residues 8–28 form a helical membrane-spanning segment; that stretch reads IPLWLIGTVTGIIVIGLLGIF.

Belongs to the PsbJ family. PSII is composed of 1 copy each of membrane proteins PsbA, PsbB, PsbC, PsbD, PsbE, PsbF, PsbH, PsbI, PsbJ, PsbK, PsbL, PsbM, PsbT, PsbX, PsbY, PsbZ, Psb30/Ycf12, at least 3 peripheral proteins of the oxygen-evolving complex and a large number of cofactors. It forms dimeric complexes.

The protein resides in the plastid. The protein localises to the chloroplast thylakoid membrane. Functionally, one of the components of the core complex of photosystem II (PSII). PSII is a light-driven water:plastoquinone oxidoreductase that uses light energy to abstract electrons from H(2)O, generating O(2) and a proton gradient subsequently used for ATP formation. It consists of a core antenna complex that captures photons, and an electron transfer chain that converts photonic excitation into a charge separation. In Pinus koraiensis (Korean pine), this protein is Photosystem II reaction center protein J.